Consider the following 252-residue polypeptide: Carbonic anhydrase (252 aa).

Positions 1 to 26 (MPRFPRTLPRLTAVLLLACTAFSAAA) are cleaved as a signal peptide. The Alpha-carbonic anhydrase domain maps to 31–252 (THWGYTGHDS…QPLNARVVIE (222 aa)). An intrachain disulfide couples C54 to C207. The active-site Proton acceptor is H92. The Zn(2+) site is built by H118, H120, and H137. 203–204 (TT) contacts substrate.

Belongs to the alpha-carbonic anhydrase family. In terms of assembly, homodimer. Requires Zn(2+) as cofactor.

It is found in the periplasm. It catalyses the reaction hydrogencarbonate + H(+) = CO2 + H2O. Functionally, reversible hydration of carbon dioxide. This Neisseria gonorrhoeae protein is Carbonic anhydrase (cah).